The chain runs to 189 residues: Putative L,D-transpeptidase in ATP synthase subunits region ORF 5 (189 aa).

A signal peptide (tat-type signal) is located at residues 1-35 (MTDTLNRRAAMALGLASAAGAALATPALSQDAAPA). The L,D-TPase catalytic domain occupies 59–189 (PMLVADTFSR…CPVGTRVRVI (131 aa)). Histidine 149 acts as the Proton donor/acceptor in catalysis. Catalysis depends on cysteine 165, which acts as the Nucleophile.

It belongs to the YkuD family. In terms of processing, predicted to be exported by the Tat system. The position of the signal peptide cleavage has not been experimentally proven.

The protein operates within cell wall biogenesis; peptidoglycan biosynthesis. This chain is Putative L,D-transpeptidase in ATP synthase subunits region ORF 5, found in Fuscovulum blasticum (Rhodobacter blasticus).